The following is a 249-amino-acid chain: Serine acetyltransferase (249 aa).

Belongs to the transferase hexapeptide repeat family.

It is found in the cytoplasm. It carries out the reaction L-serine + acetyl-CoA = O-acetyl-L-serine + CoA. It functions in the pathway amino-acid biosynthesis; L-cysteine biosynthesis; L-cysteine from L-serine: step 1/2. The polypeptide is Serine acetyltransferase (cysE) (Synechocystis sp. (strain ATCC 27184 / PCC 6803 / Kazusa)).